The primary structure comprises 245 residues: 1-(5-phosphoribosyl)-5-[(5-phosphoribosylamino)methylideneamino] imidazole-4-carboxamide isomerase (245 aa).

Aspartate 8 serves as the catalytic Proton acceptor. The active-site Proton donor is aspartate 130.

The protein belongs to the HisA/HisF family.

The protein localises to the cytoplasm. It carries out the reaction 1-(5-phospho-beta-D-ribosyl)-5-[(5-phospho-beta-D-ribosylamino)methylideneamino]imidazole-4-carboxamide = 5-[(5-phospho-1-deoxy-D-ribulos-1-ylimino)methylamino]-1-(5-phospho-beta-D-ribosyl)imidazole-4-carboxamide. It participates in amino-acid biosynthesis; L-histidine biosynthesis; L-histidine from 5-phospho-alpha-D-ribose 1-diphosphate: step 4/9. This Azotobacter vinelandii (strain DJ / ATCC BAA-1303) protein is 1-(5-phosphoribosyl)-5-[(5-phosphoribosylamino)methylideneamino] imidazole-4-carboxamide isomerase.